The primary structure comprises 1413 residues: DNA-directed RNA polymerase subunit beta' (1413 aa).

Zn(2+) contacts are provided by Cys-70, Cys-72, Cys-85, and Cys-88. Asp-460, Asp-462, and Asp-464 together coordinate Mg(2+). 4 residues coordinate Zn(2+): Cys-819, Cys-893, Cys-900, and Cys-903.

It belongs to the RNA polymerase beta' chain family. The RNAP catalytic core consists of 2 alpha, 1 beta, 1 beta' and 1 omega subunit. When a sigma factor is associated with the core the holoenzyme is formed, which can initiate transcription. Mg(2+) serves as cofactor. The cofactor is Zn(2+).

It carries out the reaction RNA(n) + a ribonucleoside 5'-triphosphate = RNA(n+1) + diphosphate. In terms of biological role, DNA-dependent RNA polymerase catalyzes the transcription of DNA into RNA using the four ribonucleoside triphosphates as substrates. The chain is DNA-directed RNA polymerase subunit beta' from Burkholderia vietnamiensis (strain G4 / LMG 22486) (Burkholderia cepacia (strain R1808)).